The chain runs to 878 residues: Enoyl-CoA isomerase/hydratase claC (878 aa).

The tract at residues 541-561 (VGPASTEATSPVVEPSTMESD) is disordered. Substrate contacts are provided by residues 677 to 681 (AGADL) and Gly724.

Belongs to the enoyl-CoA hydratase/isomerase family.

It functions in the pathway secondary metabolite biosynthesis. Its function is as follows. Enoyl-CoA isomerase/hydratase; part of the cla gene cluster that produces clavatol and ortho-quinone methide. The clavatol biosynthesis cluster cla and the terrestric acid cluster tra are both involved in the production of peniphenones and penilactones. The non-reducing PKS claF is responsible for the formation of clavatol from successive condensations of 3 malonyl-CoA units, presumably with a simple acetyl-CoA starter unit, and 2 methylation steps. The esterase claE probably collaborates with claF by catalyzing the hydrolysis of ACP-bound acyl intermediates to free the ACP from stalled intermediates. The clavatol oxidase claD then converts clavatol to hydroxyclavatol. Spontaneous dehydration of hydroxyclavatol leads to the accumulation of the highly active ortho-quinone methide. On the other hand, the PKS-NRPS hybrid traA is involved in the formation of crustosic acid, with the help of traB and traD. The polyketide synthase module (PKS) of traA is responsible for the synthesis of the polyketide backbone via the condensation of an acetyl-CoA starter unit with 3 malonyl-CoA units. The downstream nonribosomal peptide synthetase (NRPS) module then amidates the carboxyl end of the polyketide with L-malic acid. Because traA lacks a designated enoylreductase (ER) domain, the required activity is provided the enoyl reductase traG. Crustosic acid undergoes decarboxylation and isomerization to the terrestric acid, catalyzed by the 2-oxoglutarate-dependent dioxygenase traH. Both acids are further converted to the 2 gamma-butyrolactones (R)-5-methyltetronic acid and (S)-5-carboxylmethyltetronic acid, with involvement of the cytochrome P450 monooxygenase claJ. Spontaneous addition of the methide to these gamma-butyrolactones leads to peniphenone D and penilactone D, which undergo again stereospecific attacking by methide to give penilactones A and B. The function of the enoyl-CoA isomerase/hydratase claC has not been investigated yet. The chain is Enoyl-CoA isomerase/hydratase claC from Penicillium crustosum (Blue mold fungus).